The following is an 88-amino-acid chain: MNLACVLIVAVLFLTASQLATAASYARDKQEYPAVRSSDEMQDSEDLTLTKECTDDSQFCDPNDHDCCSGECIDEGGRGVCAIVPEHV.

Residues 1–22 (MNLACVLIVAVLFLTASQLATA) form the signal peptide. The propeptide occupies 23–52 (ASYARDKQEYPAVRSSDEMQDSEDLTLTKE). 3 disulfide bridges follow: C53-C68, C60-C72, and C67-C81.

Expressed by the venom duct.

It localises to the secreted. Functionally, may act as a neurotoxin, but produces no obvious effect on ionic currents when tested on the mouse dorsal rooted ganglia (DRG). The sequence is that of Conotoxin VxVIB from Conus vexillum (Flag cone).